Here is a 466-residue protein sequence, read N- to C-terminus: RuvB-like helicase 2 (466 aa).

Residue 74 to 81 (GPPSTGKT) participates in ATP binding.

This sequence belongs to the RuvB family. May form heterododecamers with RVB1. Component of the SWR1 chromatin remodeling complex, the INO80 chromatin remodeling complex, and of the R2TP complex.

It is found in the nucleus. It catalyses the reaction ATP + H2O = ADP + phosphate + H(+). Functionally, DNA helicase which participates in several chromatin remodeling complexes, including the SWR1 and the INO80 complexes. The SWR1 complex mediates the ATP-dependent exchange of histone H2A for the H2A variant HZT1 leading to transcriptional regulation of selected genes by chromatin remodeling. The INO80 complex remodels chromatin by shifting nucleosomes and is involved in DNA repair. Also involved in pre-rRNA processing. The sequence is that of RuvB-like helicase 2 (RVB2) from Yarrowia lipolytica (strain CLIB 122 / E 150) (Yeast).